Consider the following 490-residue polypeptide: UDP-N-acetylmuramyl-tripeptide synthetase (490 aa).

113-119 (GTDGKTT) is an ATP binding site. Residues 158 to 159 (TT), S185, and R193 contribute to the UDP-N-acetyl-alpha-D-muramoyl-L-alanyl-D-glutamate site. K225 is modified (N6-carboxylysine).

The protein belongs to the MurCDEF family. MurE subfamily. Carboxylation is probably crucial for Mg(2+) binding and, consequently, for the gamma-phosphate positioning of ATP.

The protein localises to the cytoplasm. It participates in cell wall biogenesis; peptidoglycan biosynthesis. Catalyzes the addition of an amino acid to the nucleotide precursor UDP-N-acetylmuramoyl-L-alanyl-D-glutamate (UMAG) in the biosynthesis of bacterial cell-wall peptidoglycan. In Deinococcus radiodurans (strain ATCC 13939 / DSM 20539 / JCM 16871 / CCUG 27074 / LMG 4051 / NBRC 15346 / NCIMB 9279 / VKM B-1422 / R1), this protein is UDP-N-acetylmuramyl-tripeptide synthetase.